The chain runs to 502 residues: Type II secretion system protein E (502 aa).

Gly263–Thr270 lines the ATP pocket. Residues Cys396, Cys399, Cys429, and Cys432 each contribute to the Zn(2+) site. The segment at Ser461–Asp480 is disordered.

It belongs to the GSP E family. In terms of assembly, homodimer. Dimerization is directed by a relatively short domain near the extreme N-terminus and is essential for extracellular protein secretion. May form homooligomers. Interacts with XcpY/GspL. Forms an inner membrane platform subcomplex with XcpS/GspF, XcpY/GspL and XcpZ/GspM. Zn(2+) serves as cofactor.

It is found in the cell inner membrane. It carries out the reaction ATP + H2O + cellular proteinSide 1 = ADP + phosphate + cellular proteinSide 2.. ATPase component of the type II secretion system required for the energy-dependent secretion of extracellular factors such as proteases and toxins from the periplasm. Acts as a molecular motor to provide the energy that is required for assembly of the pseudopilus and the extrusion of substrates generated in the cytoplasm. The protein is Type II secretion system protein E (xcpR) of Pseudomonas aeruginosa (strain ATCC 15692 / DSM 22644 / CIP 104116 / JCM 14847 / LMG 12228 / 1C / PRS 101 / PAO1).